The chain runs to 379 residues: Pentatricopeptide repeat-containing protein At3g25210, mitochondrial (379 aa).

PPR repeat units follow at residues 142–177 (SVPLYNCIIRFCCGRKFLFNRAFDVYNKMLRSDDSK), 179–221 (DLET…GVIP), 222–256 (DTFVLNMIIKAYAKCLEVDEAIRVFKEMALYGSEP), 257–291 (NAYTYSYLVKGVCEKGRVGQGLGFYKEMQVKGMVP), 292–326 (NGSCYMVLICSLSMERRLDEAVEVVYDMLANSLSP), and 327–361 (DMLTYNTVLTELCRGGRGSEALEMVEEWKKRDPVM).

The protein belongs to the PPR family. P subfamily.

It is found in the mitochondrion. This is Pentatricopeptide repeat-containing protein At3g25210, mitochondrial from Arabidopsis thaliana (Mouse-ear cress).